Here is a 606-residue protein sequence, read N- to C-terminus: Calmegin (606 aa).

The first 19 residues, 1–19 (MRFQGFWLCLGLLFISVNA), serve as a signal peptide directing secretion. Over 20–466 (EFMDDSVEME…QLMSATEQRP (447 aa)) the chain is Lumenal. At Lys124 the chain carries N6-acetyllysine. Residues Cys147 and Cys181 are joined by a disulfide bond. Residues 255–308 (PPINPPKEIEDPTDEKPDDWDERAKIPDASAVKPEDWDESEPPQIVDSSAVKPD) form a disordered region. 8 tandem repeats follow at residues 263 to 276 (IEDP…DWDE), 280 to 293 (IPDA…DWDE), 299 to 312 (IVDS…GWLD), 318 to 331 (IPDP…DWNE), 335 to 348 (GEWE…PACR), 352 to 365 (GEWS…PKYK), 366 to 379 (GIWR…PNYQ), and 380 to 393 (GIWS…PDYF). Positions 265–275 (DPTDEKPDDWD) are enriched in acidic residues. An interaction with PPIB region spans residues 313 to 346 (NEPEFIPDPNAEKPFDWNEDMDGEWEAPHISNPA). Residues Cys347 and Cys351 are joined by a disulfide bond. Residues 467 to 487 (WLWFIYLLTAALPIALIGSFC) form a helical membrane-spanning segment. Residues 488-606 (WPRKVKKKYE…SVRKRRVRKE (119 aa)) lie on the Cytoplasmic side of the membrane. Residues 518–544 (EVKEEKAALEKPVDLEEEKKQSDGEIV) show a composition bias toward basic and acidic residues. A disordered region spans residues 518 to 606 (EVKEEKAALE…SVRKRRVRKE (89 aa)). The segment covering 545–567 (EKEEEGEPEEKSEEEIEIIEGQE) has biased composition (acidic residues). 7 positions are modified to phosphoserine: Ser556, Ser572, Ser575, Ser577, Ser587, Ser590, and Ser597. Basic and acidic residues predominate over residues 568–579 (EGNKSNKSGSED). A compositionally biased stretch (basic residues) spans 597–606 (SVRKRRVRKE).

It belongs to the calreticulin family. Interacts with PPIB and PDILT. Interacts with ADAM2.

Its subcellular location is the endoplasmic reticulum membrane. Functions during spermatogenesis as a chaperone for a range of client proteins that are important for sperm adhesion onto the egg zona pellucida and for subsequent penetration of the zona pellucida. Required for normal sperm migration from the uterus into the oviduct. Required for normal male fertility. Binds calcium ions. The sequence is that of Calmegin (CLGN) from Bos taurus (Bovine).